The sequence spans 117 residues: Photosystem II reaction center Psb28 protein (117 aa).

This sequence belongs to the Psb28 family. As to quaternary structure, part of the photosystem II complex.

The protein localises to the cellular thylakoid membrane. The sequence is that of Photosystem II reaction center Psb28 protein from Prochlorococcus marinus (strain MIT 9515).